The sequence spans 148 residues: uncharacterized protein (148 aa).

The tract at residues 1–108 (MGRAGPRSTA…PSRLRGKRSL (108 aa)) is disordered. The span at 22–42 (RRPRPWQKPTSPRRLHRRRPR) shows a compositional bias: basic residues. Over residues 88–97 (DTSASNPSQR) the composition is skewed to polar residues.

This is an uncharacterized protein from Homo sapiens (Human).